Here is a 502-residue protein sequence, read N- to C-terminus: Protein O-glucosyltransferase 2 (502 aa).

The N-terminal stretch at 1–19 (MFGTLLLYCFFLATVPALA) is a signal peptide. The stretch at 24–130 (ERQLSPEKSE…VAKSPYILKG (107 aa)) is one Filamin repeat. Residues asparagine 302 and asparagine 414 are each glycosylated (N-linked (GlcNAc...) asparagine). The Prevents secretion from ER motif lies at 499 to 502 (KDEL).

This sequence belongs to the KDELC family. In terms of processing, N-glycosylated.

The protein resides in the endoplasmic reticulum lumen. The catalysed reaction is L-seryl-[EGF-like domain protein] + UDP-alpha-D-glucose = 3-O-(beta-D-glucosyl)-L-seryl-[EGF-like domain protein] + UDP + H(+). The enzyme catalyses L-seryl-[EGF-like domain protein] + UDP-alpha-D-xylose = 3-O-(beta-D-xylosyl)-L-seryl-[EGF-like domain protein] + UDP + H(+). Its pathway is protein modification; protein glycosylation. In terms of biological role, protein glucosyltransferase that catalyzes the transfer of glucose from UDP-glucose to a serine residue within the consensus sequence peptide C-X-N-T-X-G-S-F-X-C. Can also catalyze the transfer of xylose from UDP-xylose but less efficiently. Specifically targets extracellular EGF repeats of proteins such as NOTCH1, NOTCH3, FBN1, FBN2 and LTBP1. May regulate the transport of NOTCH1 and NOTCH3 to the plasma membrane and thereby the Notch signaling pathway. The chain is Protein O-glucosyltransferase 2 from Homo sapiens (Human).